A 425-amino-acid polypeptide reads, in one-letter code: Cyclin-K (425 aa).

Residues 262 to 425 (GKQPIPQQPP…RRYLDDDRNL (164 aa)) are disordered. Residues 366–377 (AEPAAASELDPA) show a composition bias toward low complexity. Pro residues predominate over residues 379 to 399 (GPAPPLPHGAPPPLPHRPPPT).

It belongs to the cyclin family.

Its subcellular location is the nucleus. Its function is as follows. Regulatory subunit of cyclin-dependent kinases that mediates activation of target kinases. Plays a role in transcriptional regulation via its role in regulating the phosphorylation of the C-terminal domain (CTD) of the large subunit of RNA polymerase II (POLR2A). The chain is Cyclin-K (ccnk) from Danio rerio (Zebrafish).